The primary structure comprises 304 residues: DCN1-like protein 3 (304 aa).

Disordered stretches follow at residues 1–86 (MGQC…AEES) and 284–304 (EGEG…EEQT). Residue Gly2 is the site of N-myristoyl glycine attachment. Residues 86–278 (SSLQRLEELF…LFDTFVEWEM (193 aa)) form the DCUN1 domain.

As to quaternary structure, part of a complex containing DCUN1D3, CUL3 and RBX1. Interacts (via the DCUN1 domain) with the unneddylated cullins: interacts with CUL1, CUL2, CUL3, CUL4A, CUL4B and CUL5; these interactions promote the cullin neddylation and the identity of the cullin dictates the affinity of the interaction. Interacts preferentially with CUL3; this interaction triggers the relocalization of CUL3 to the cell membrane where CUL3 is neddylated. Interacts (via DCUN1 domain) with RBX1. May also interact with regulators or subunits of cullin-RING ligases such as RNF7, ELOB and DDB1; these interactions are bridged by cullins. Interacts (via DCUN1 domain) with CAND1; this interaction is bridged by cullins and strongly inhibits cullin neddylation. These CAND-cullin-DCNL complexes can only be neddylated in the presence of a substrate adapter. Interacts (via DCUN1 domain) with the N-terminally acetylated form of UBE2M and UBE2F.

Its subcellular location is the cell membrane. The protein resides in the cytoplasm. The protein localises to the nucleus. It localises to the perinuclear region. Contributes to the neddylation of all cullins by transferring NEDD8 from N-terminally acetylated NEDD8-conjugating E2s enzyme to different cullin C-terminal domain-RBX complexes and may play a role in the cell cycle progression by regulating the SCF ubiquitin E3 ligase complex, after UV damage. At the cell membrane, can promote and as well inhibit cullins neddylation. The chain is DCN1-like protein 3 from Pongo abelii (Sumatran orangutan).